We begin with the raw amino-acid sequence, 299 residues long: MSSKATKSDVDPLHSFLAGSLAGAAEACITYPFEFAKTRLQLIDKASKASRNPLVLIYKTAKTQGIGSIYVGCPAFIIGNTAKAGIRFLGFDTIKDMLRDSETGELSGTRGVIAGLGAGLLESVAAVTPFEAIKTALIDDKQSATPKYHNNGRGVVRNYSSLVRDKGFSGLYRGVLPVSMRQAANQAVRLGCYNKIKTLIQDYTDSPKDKPLSSGLTFLVGAFSGIVTVYSTMPLDTVKTRMQSLDSTKYSSTMNCFATIFKEEGLKTFWKGATPRLGRLVLSGGIVFTIYEKVLVMLA.

Solcar repeat units lie at residues 10-97 (VDPL…IKDM), 109-199 (TRGV…IKTL), and 212-297 (LSSG…VLVM). The next 6 helical transmembrane spans lie at 16-36 (FLAG…FEFA), 66-86 (IGSI…KAGI), 113-133 (IAGL…FEAI), 174-193 (GVLP…LGCY), 215-235 (GLTF…TMPL), and 272-291 (GATP…FTIY).

It belongs to the mitochondrial carrier (TC 2.A.29) family.

It is found in the mitochondrion inner membrane. Transport of citrate across inner mitochondrial membrane. The sequence is that of Tricarboxylate transport protein (CTP1) from Saccharomyces cerevisiae (strain ATCC 204508 / S288c) (Baker's yeast).